We begin with the raw amino-acid sequence, 209 residues long: Large ribosomal subunit protein uL3 (209 aa).

Gln-150 is modified (N5-methylglutamine).

Belongs to the universal ribosomal protein uL3 family. As to quaternary structure, part of the 50S ribosomal subunit. Forms a cluster with proteins L14 and L19. In terms of processing, methylated by PrmB.

In terms of biological role, one of the primary rRNA binding proteins, it binds directly near the 3'-end of the 23S rRNA, where it nucleates assembly of the 50S subunit. The chain is Large ribosomal subunit protein uL3 from Vibrio campbellii (strain ATCC BAA-1116).